The chain runs to 130 residues: Protein ApaG (130 aa).

In terms of domain architecture, ApaG spans 3 to 127 (RATTRKIQVT…FSLDVPHMAR (125 aa)).

This is Protein ApaG from Azorhizobium caulinodans (strain ATCC 43989 / DSM 5975 / JCM 20966 / LMG 6465 / NBRC 14845 / NCIMB 13405 / ORS 571).